The sequence spans 122 residues: Large ribosomal subunit protein bL19c (122 aa).

Belongs to the bacterial ribosomal protein bL19 family.

Its subcellular location is the plastid. It localises to the chloroplast. The chain is Large ribosomal subunit protein bL19c (rpl19) from Rhodomonas salina (Cryptomonas salina).